The sequence spans 430 residues: MPDDYGTQIAEITAREILDSRGRPTVEAEVHLEDGSVGLAQVPSGASTGTFEAHELRDDDPSRYGGKGVQKAVENVSAIEDALIGLSALDQEGLDKAMIALDGTPNKKNLGANAILAVSLATAHAAATSLNLPLYRYLGGPLANVLPVPMMNVINGGAHADNNVDFQEFMIMPVGAPSFKEALRWGAEVFHALAKVLKDKGLATGVGDEGGFAPNLGSNKEALELLLTAIEAAGYKPGEQVALAMDVASSEFYKNGLYTCDGVSHEPAGMIGILADLVSQYPIVSIEDGLQEDDWSNWKTLTQQLGSTVQLVGDDLFVTNPDRLQSGIEQGVGNAVLIKLNQIGTLTETLRTIDLATRSGYRSVISHRSGETEDTTIADLAVATRAGQIKTGSLSRSERIAKYNRLLRIEAALGENALYAGAIGLGPKGR.

(2R)-2-phosphoglycerate is bound at residue glutamine 167. Glutamate 209 functions as the Proton donor in the catalytic mechanism. Positions 246, 287, and 314 each coordinate Mg(2+). 3 residues coordinate (2R)-2-phosphoglycerate: lysine 339, arginine 368, and serine 369. Lysine 339 acts as the Proton acceptor in catalysis.

Belongs to the enolase family. Mg(2+) is required as a cofactor.

It is found in the cytoplasm. It localises to the secreted. The protein resides in the cell surface. The catalysed reaction is (2R)-2-phosphoglycerate = phosphoenolpyruvate + H2O. It participates in carbohydrate degradation; glycolysis; pyruvate from D-glyceraldehyde 3-phosphate: step 4/5. Its function is as follows. Catalyzes the reversible conversion of 2-phosphoglycerate (2-PG) into phosphoenolpyruvate (PEP). It is essential for the degradation of carbohydrates via glycolysis. The chain is Enolase from Synechococcus sp. (strain ATCC 27144 / PCC 6301 / SAUG 1402/1) (Anacystis nidulans).